The chain runs to 341 residues: Putative NADPH-dependent methylglyoxal reductase GRP2 (341 aa).

NADP(+)-binding residues include Lys40 and Tyr171.

This sequence belongs to the NAD(P)-dependent epimerase/dehydratase family. Dihydroflavonol-4-reductase subfamily.

It localises to the cytoplasm. The catalysed reaction is (S)-lactaldehyde + NADP(+) = methylglyoxal + NADPH + H(+). Its function is as follows. Catalyzes the irreversible reduction of the cytotoxic compound methylglyoxal (MG, 2-oxopropanal) to (S)-lactaldehyde. MG is synthesized via a bypath of glycolysis from dihydroxyacetone phosphate and is believed to play a role in cell cycle regulation and stress adaptation. The chain is Putative NADPH-dependent methylglyoxal reductase GRP2 (GRP2) from Candida albicans (strain SC5314 / ATCC MYA-2876) (Yeast).